A 314-amino-acid chain; its full sequence is uncharacterized protein (314 aa).

Over residues 68-91 (EKKKKSSSFEKRDKRRVQLKEKSP) the composition is skewed to basic and acidic residues. 2 disordered regions span residues 68-97 (EKKKKSSSFEKRDKRRVQLKEKSPLRTPRN) and 141-164 (MDVQSPSTMSTSKNNVRNAERPAS). The span at 144-157 (QSPSTMSTSKNNVR) shows a compositional bias: polar residues.

The protein localises to the mitochondrion. This is an uncharacterized protein from Schizosaccharomyces pombe (strain 972 / ATCC 24843) (Fission yeast).